A 159-amino-acid chain; its full sequence is Putative transcriptional regulatory protein rrnAC0199 (159 aa).

It belongs to the Tfx family.

Its function is as follows. Putative transcriptional regulator. In Haloarcula marismortui (strain ATCC 43049 / DSM 3752 / JCM 8966 / VKM B-1809) (Halobacterium marismortui), this protein is Putative transcriptional regulatory protein rrnAC0199.